The following is a 255-amino-acid chain: Zinc import ATP-binding protein ZnuC 1 (255 aa).

The 214-residue stretch at 7–220 folds into the ABC transporter domain; that stretch reads IRLQDVTVKI…PAFINLFGTQ (214 aa). Position 39 to 46 (39 to 46) interacts with ATP; the sequence is GPNGAGKS. The segment at 229-255 is disordered; it reads HHHHDHHHHTDGTVAAGSECSHGDQHA.

The protein belongs to the ABC transporter superfamily. Zinc importer (TC 3.A.1.15.5) family. In terms of assembly, the complex is composed of two ATP-binding proteins (ZnuC), two transmembrane proteins (ZnuB) and a solute-binding protein (ZnuA).

The protein resides in the cell inner membrane. The enzyme catalyses Zn(2+)(out) + ATP(in) + H2O(in) = Zn(2+)(in) + ADP(in) + phosphate(in) + H(+)(in). Its function is as follows. Part of the ABC transporter complex ZnuABC involved in zinc import. Responsible for energy coupling to the transport system. The polypeptide is Zinc import ATP-binding protein ZnuC 1 (Hahella chejuensis (strain KCTC 2396)).